Consider the following 111-residue polypeptide: ATP-dependent Clp protease adapter protein ClpS (111 aa).

This sequence belongs to the ClpS family. As to quaternary structure, binds to the N-terminal domain of the chaperone ClpA.

In terms of biological role, involved in the modulation of the specificity of the ClpAP-mediated ATP-dependent protein degradation. This is ATP-dependent Clp protease adapter protein ClpS from Legionella pneumophila (strain Corby).